Here is a 356-residue protein sequence, read N- to C-terminus: MSL complex subunit 3B (356 aa).

The MRG domain maps to 2–350 (EERTVTLEIP…SEVHYSTRNP (349 aa)). Disordered regions lie at residues 135 to 210 (TNRS…WQQD) and 225 to 247 (KTPV…SPVF). Residues 142–156 (LSPSLRLLNPSRPQS) are compositionally biased toward low complexity. Composition is skewed to polar residues over residues 178 to 189 (AVQSLRRSSPHT) and 229 to 243 (HSRS…SQEG).

It localises to the nucleus. Functionally, probable non-catalytic component of the MSL histone acetyltransferase complex, a multiprotein complex that mediates the majority of histone H4 acetylation at 'Lys-16' (H4K16ac), an epigenetic mark that prevents chromatin compaction. The protein is MSL complex subunit 3B of Homo sapiens (Human).